Reading from the N-terminus, the 287-residue chain is Probable phosphite transport system-binding protein PtxB (287 aa).

Positions 1 to 23 (MKRLSALLLTCLLSAVSSLSALA) are cleaved as a signal peptide.

It belongs to the phosphate/phosphite/phosphonate binding protein family.

In terms of biological role, probably forms part of a binding-protein-dependent phosphite transporter. Required for oxidation of phosphite to phosphate. This Stutzerimonas stutzeri (Pseudomonas stutzeri) protein is Probable phosphite transport system-binding protein PtxB (ptxB).